An 827-amino-acid polypeptide reads, in one-letter code: N-terminal kinase-like protein (827 aa).

The Protein kinase domain occupies Met1–Leu309. 3 HEAT repeats span residues Ile345–Gln383, Ile384–Glu422, and Val502–Ser540. Low complexity predominate over residues Asp586–Ser624. A disordered region spans residues Asp586 to Asp827. Basic and acidic residues predominate over residues Glu630 to Arg640. Residues Trp641–Ala652 show a composition bias toward acidic residues. Positions Asp667–Val678 are enriched in basic and acidic residues. 2 stretches are compositionally biased toward polar residues: residues Asp679–Val690 and Asn737–Arg746. Positions Gly774–Glu783 are enriched in acidic residues. Residues Leu788 to Gly817 adopt a coiled-coil conformation. The segment covering Glu792–Ala814 has biased composition (basic and acidic residues).

This sequence belongs to the protein kinase superfamily.

Functionally, regulates COPI-mediated retrograde protein traffic at the interface between the Golgi apparatus and the endoplasmic reticulum. Involved in the maintenance of the Golgi apparatus morphology. The polypeptide is N-terminal kinase-like protein (scyl1) (Xenopus tropicalis (Western clawed frog)).